The chain runs to 179 residues: Large ribosomal subunit protein uL5 (179 aa).

It belongs to the universal ribosomal protein uL5 family. In terms of assembly, part of the 50S ribosomal subunit; part of the 5S rRNA/L5/L18/L25 subcomplex. Contacts the 5S rRNA and the P site tRNA. Forms a bridge to the 30S subunit in the 70S ribosome.

Its function is as follows. This is one of the proteins that bind and probably mediate the attachment of the 5S RNA into the large ribosomal subunit, where it forms part of the central protuberance. In the 70S ribosome it contacts protein S13 of the 30S subunit (bridge B1b), connecting the 2 subunits; this bridge is implicated in subunit movement. Contacts the P site tRNA; the 5S rRNA and some of its associated proteins might help stabilize positioning of ribosome-bound tRNAs. The protein is Large ribosomal subunit protein uL5 of Desulfatibacillum aliphaticivorans.